We begin with the raw amino-acid sequence, 65 residues long: Large ribosomal subunit protein bL35 (65 aa).

The tract at residues 1–26 (MPKMKTNRASAKRFKKTASGGFKAGQ) is disordered.

It belongs to the bacterial ribosomal protein bL35 family.

The protein is Large ribosomal subunit protein bL35 of Oenococcus oeni (strain ATCC BAA-331 / PSU-1).